The sequence spans 241 residues: Thiamine import ATP-binding protein ThiQ (241 aa).

Residues 2–239 (IQLDKLNHCY…PKDEVLIQYL (238 aa)) form the ABC transporter domain. 41-48 (GPSGAGKS) is an ATP binding site.

The protein belongs to the ABC transporter superfamily. Thiamine importer (TC 3.A.1.19.1) family. The complex is composed of two ATP-binding proteins (ThiQ), two transmembrane proteins (ThiP) and a solute-binding protein (ThiB).

Its subcellular location is the cell inner membrane. The enzyme catalyses thiamine(out) + ATP + H2O = thiamine(in) + ADP + phosphate + H(+). Functionally, part of the ABC transporter complex ThiBPQ involved in thiamine import. Responsible for energy coupling to the transport system. This Photobacterium profundum (strain SS9) protein is Thiamine import ATP-binding protein ThiQ.